The primary structure comprises 240 residues: Homeobox protein DLX-4 (240 aa).

The interval 80-120 is disordered; that stretch reads QPLCGPAEHPQELEADSEKPRLSPEPSERRPQAPAKKLRKP. The segment covering 88-110 has biased composition (basic and acidic residues); it reads HPQELEADSEKPRLSPEPSERRP. A DNA-binding region (homeobox) is located at residues 117 to 176; it reads LRKPRTIYSSLQLQHLNQRFQHTQYLALPERAQLAAQLGLTQTQVKIWFQNKRSKYKKLL.

Belongs to the distal-less homeobox family. Expressed in leukemia cells and placenta. Also expressed in kidney and fetal liver.

The protein resides in the nucleus. Its function is as follows. May play a role in determining the production of hemoglobin S. May act as a repressor. During embryonic development, plays a role in palatogenesis. This is Homeobox protein DLX-4 (DLX4) from Homo sapiens (Human).